The primary structure comprises 40 residues: Photosystem II reaction center protein J (40 aa).

Residues 8-28 (IPLWLIGTVAGILIIGLLGVF) traverse the membrane as a helical segment.

The protein belongs to the PsbJ family. As to quaternary structure, PSII is composed of 1 copy each of membrane proteins PsbA, PsbB, PsbC, PsbD, PsbE, PsbF, PsbH, PsbI, PsbJ, PsbK, PsbL, PsbM, PsbT, PsbX, PsbY, PsbZ, Psb30/Ycf12, at least 3 peripheral proteins of the oxygen-evolving complex and a large number of cofactors. It forms dimeric complexes.

The protein resides in the plastid. It is found in the chloroplast thylakoid membrane. One of the components of the core complex of photosystem II (PSII). PSII is a light-driven water:plastoquinone oxidoreductase that uses light energy to abstract electrons from H(2)O, generating O(2) and a proton gradient subsequently used for ATP formation. It consists of a core antenna complex that captures photons, and an electron transfer chain that converts photonic excitation into a charge separation. The polypeptide is Photosystem II reaction center protein J (Nandina domestica (Heavenly bamboo)).